The following is a 378-amino-acid chain: MSGLEAIWWRERPGPLGALAGAPLLLAEAPFRAAAALRGALYDRGLLPAARAGAPVVSIGNLAVGGAGKTPAALAVAARLAGRGRRVAILSRGYGAARADARVASDGAGALLPAAEAGDEPALLARRLPGVAVLCGPRRAELARTAVESLGADALVLDDGFQHRALARDLDVVVLDASNPFGNGHLLPRGPNREPPSALRRAGLVWLSHADRAAPERLEALRALARDATGRAPVESRHAPTALLDGALREAGALEALRGRRVAALSGLARPAGFLRTLEALGAEVALARAFPDHHRFTAGELDAVLREAAASGCAWVVTTEKDAVRLDPALAAAAGDRLRVVRVDAELLRGADVLEAALAAALAAAPQPRPAPRAPVA.

63–70 (AVGGAGKT) is a binding site for ATP.

This sequence belongs to the LpxK family.

The enzyme catalyses a lipid A disaccharide + ATP = a lipid IVA + ADP + H(+). It participates in glycolipid biosynthesis; lipid IV(A) biosynthesis; lipid IV(A) from (3R)-3-hydroxytetradecanoyl-[acyl-carrier-protein] and UDP-N-acetyl-alpha-D-glucosamine: step 6/6. Transfers the gamma-phosphate of ATP to the 4'-position of a tetraacyldisaccharide 1-phosphate intermediate (termed DS-1-P) to form tetraacyldisaccharide 1,4'-bis-phosphate (lipid IVA). The protein is Tetraacyldisaccharide 4'-kinase of Anaeromyxobacter dehalogenans (strain 2CP-C).